A 136-amino-acid chain; its full sequence is Large ribosomal subunit protein uL16c (136 aa).

The protein belongs to the universal ribosomal protein uL16 family. Part of the 50S ribosomal subunit.

The protein resides in the plastid. Its subcellular location is the chloroplast. The protein is Large ribosomal subunit protein uL16c of Oryza nivara (Indian wild rice).